Reading from the N-terminus, the 393-residue chain is Probable xylan O-acetyltransferase 11 (393 aa).

The Cytoplasmic portion of the chain corresponds to 1–9 (MHQPAIMQR). The chain crosses the membrane as a helical; Signal-anchor for type II membrane protein span at residues 10–26 (ALAVVALLAAAAAIAAA). Over 27-393 (QGESPELLPF…LFFPARDEAI (367 aa)) the chain is Lumenal. 4 disulfides stabilise this stretch: Cys-45-Cys-96, Cys-67-Cys-132, Cys-76-Cys-368, and Cys-283-Cys-364. The N-linked (GlcNAc...) asparagine glycan is linked to Asn-102. The short motif at 119–121 (GDS) is the GDS motif element. Residue Ser-121 is the Nucleophile of the active site. N-linked (GlcNAc...) asparagine glycosylation is present at Asn-325. Catalysis depends on Asp-363, which acts as the Proton donor. The DXXH motif motif lies at 363 to 366 (DCTH). The active-site Proton acceptor is the His-366.

The protein belongs to the PC-esterase family. TBL subfamily. Expressed in roots, leaves and stems.

The protein localises to the golgi apparatus membrane. Its function is as follows. Probable xylan acetyltransferase required for 2-O- and 3-O-monoacetylation of xylosyl residues in xylan. Possesses extremely low activity in vitro. This Oryza sativa subsp. japonica (Rice) protein is Probable xylan O-acetyltransferase 11.